A 120-amino-acid polypeptide reads, in one-letter code: Large ribosomal subunit protein bL19 (120 aa).

The protein belongs to the bacterial ribosomal protein bL19 family.

This protein is located at the 30S-50S ribosomal subunit interface and may play a role in the structure and function of the aminoacyl-tRNA binding site. This Synechococcus sp. (strain ATCC 27144 / PCC 6301 / SAUG 1402/1) (Anacystis nidulans) protein is Large ribosomal subunit protein bL19.